Here is a 339-residue protein sequence, read N- to C-terminus: GTPase Obg (339 aa).

Residues methionine 1–leucine 159 enclose the Obg domain. Positions asparagine 127–glycine 147 are disordered. An OBG-type G domain is found at alanine 160–glutamate 333. Residues glycine 166 to serine 173, phenylalanine 191 to tyrosine 195, aspartate 213 to glycine 216, asparagine 283 to aspartate 286, and serine 314 to isoleucine 316 contribute to the GTP site. Mg(2+) is bound by residues serine 173 and threonine 193.

The protein belongs to the TRAFAC class OBG-HflX-like GTPase superfamily. OBG GTPase family. Monomer. It depends on Mg(2+) as a cofactor.

The protein resides in the cytoplasm. In terms of biological role, an essential GTPase which binds GTP, GDP and possibly (p)ppGpp with moderate affinity, with high nucleotide exchange rates and a fairly low GTP hydrolysis rate. Plays a role in control of the cell cycle, stress response, ribosome biogenesis and in those bacteria that undergo differentiation, in morphogenesis control. This is GTPase Obg from Coxiella burnetii (strain CbuK_Q154) (Coxiella burnetii (strain Q154)).